We begin with the raw amino-acid sequence, 898 residues long: Cilium assembly protein DZIP1 (898 aa).

Residues 14–66 (DPPGTHSSAGIPSLLSSPQSQPSSGSQSRPAPSTMSGPLTSSGASTSIPPPFK) are disordered. Residues 25-46 (PSLLSSPQSQPSSGSQSRPAPS) are compositionally biased toward low complexity. Positions 47–60 (TMSGPLTSSGASTS) are enriched in polar residues. A coiled-coil region spans residues 145–197 (LSISLQAAEERLLAEAREREQICVQLQKKTQDAKALKEELKQRKKIIASQQAM). The C2H2-type zinc finger occupies 207 to 230 (HKCQHCEKAFMNASFLQSHMQRRH). 2 coiled-coil regions span residues 242-353 (NQKK…VQTQ) and 407-447 (SAVS…ISSK). Residues 435–463 (TSQNKQMKQISSKPPTITVQREGVSTPSP) show a composition bias toward polar residues. Disordered stretches follow at residues 435–509 (TSQN…SWQK), 585–739 (EQRV…WTDG), and 773–878 (KSLE…DAGT). The segment covering 495–505 (SSISESPTENR) has biased composition (low complexity). Positions 573–590 (YRRALKEISHKLEQRVKE) form a coiled coil. Polar residues predominate over residues 605–652 (VVQSRPRSSSFPSTVTRVMSGPASKQQRTPQPVPRSRTNVPHKTSTPL). Residues 662-684 (SDEDSSEEEEEEEEEEESSDEES) are compositionally biased toward acidic residues. Polar residues-rich tracts occupy residues 685-715 (PQMQKKTVLVNSSTAKAQNTAKTQSTAQSVR) and 723-734 (AEPTNVTTLSDS). Residues 797–815 (KPTDVRNTRQNAKKELKYS) are compositionally biased toward basic and acidic residues. Over residues 816 to 826 (DDDDDDDDDWD) the composition is skewed to acidic residues. Polar residues predominate over residues 855-866 (DTSTSVWGSSTG).

This sequence belongs to the DZIP C2H2-type zinc-finger protein family. Expressed throughout the embryo starting at 12 hours.

It localises to the cell projection. The protein resides in the cilium. Its subcellular location is the cytoplasm. It is found in the cytoskeleton. The protein localises to the cilium basal body. It localises to the microtubule organizing center. The protein resides in the centrosome. Its subcellular location is the centriole. It is found in the nucleus. Functionally, molecular adapter that recruits protein complexes required for cilium assembly and function to the cilium basal body. Required for establishment of left-right asymmetry during embryogenesis. Acts as a permissive factor that is required for the proper regulation of Hedgehog (Hh) target genes in response to Hh signals. Acts downstream of the Smoothened protein to modulate Gli activity in the somites of the developing embryo. In Danio rerio (Zebrafish), this protein is Cilium assembly protein DZIP1 (dzip1).